A 467-amino-acid chain; its full sequence is Asparagine--tRNA ligase (467 aa).

Belongs to the class-II aminoacyl-tRNA synthetase family. Homodimer.

The protein localises to the cytoplasm. The catalysed reaction is tRNA(Asn) + L-asparagine + ATP = L-asparaginyl-tRNA(Asn) + AMP + diphosphate + H(+). This Legionella pneumophila (strain Corby) protein is Asparagine--tRNA ligase.